The sequence spans 338 residues: Fe-S cluster assembly protein DRE2 (338 aa).

An N-terminal SAM-like domain region spans residues 1 to 165 (MAKSGLLLIH…LPSFKKAANK (165 aa)). The tract at residues 166–232 (PLPTFKKKVE…DDLLNEEDAK (67 aa)) is linker. The segment at 181-223 (VEARVHKAENDDDELEDEEDENLFDASRSKYFDEDDSESLDED) is disordered. Acidic residues-rich tracts occupy residues 190–203 (NDDD…DENL) and 213–223 (DEDDSESLDED). Residues cysteine 242, cysteine 253, cysteine 256, and cysteine 258 each coordinate [2Fe-2S] cluster. Residues 242-258 (CGKSKTKKKKACKDCSC) are fe-S binding site A. 4 residues coordinate [4Fe-4S] cluster: cysteine 301, cysteine 304, cysteine 312, and cysteine 315. 2 short sequence motifs (cx2C motif) span residues 301–304 (CGSC) and 312–315 (CTGC). Positions 301 to 315 (CGSCSLGDAFRCTGC) are fe-S binding site B.

The protein belongs to the anamorsin family. Monomer. Interacts with TAH18. Interacts with MIA40. Requires [2Fe-2S] cluster as cofactor. [4Fe-4S] cluster is required as a cofactor.

It localises to the cytoplasm. The protein resides in the mitochondrion intermembrane space. Component of the cytosolic iron-sulfur (Fe-S) protein assembly (CIA) machinery required for the maturation of extramitochondrial Fe-S proteins. Part of an electron transfer chain functioning in an early step of cytosolic Fe-S biogenesis, facilitating the de novo assembly of a [4Fe-4S] cluster on the scaffold complex CFD1-NBP35. Electrons are transferred to DRE2 from NADPH via the FAD- and FMN-containing protein TAH18. TAH18-DRE2 are also required for the assembly of the diferric tyrosyl radical cofactor of ribonucleotide reductase (RNR), probably by providing electrons for reduction during radical cofactor maturation in the catalytic small subunit RNR2. The chain is Fe-S cluster assembly protein DRE2 from Candida glabrata (strain ATCC 2001 / BCRC 20586 / JCM 3761 / NBRC 0622 / NRRL Y-65 / CBS 138) (Yeast).